Here is a 165-residue protein sequence, read N- to C-terminus: MRVRESELPGIGQKVEMITRNRDKISIIIHHDGRRELYYFDENDHEECVASVQFDDAEARQMSAILGGMAYKPKALEQVESALDDLIIEWCKAEAGAPAIHQTIGDLNVGQEYHVTVIAIVKKNQDKQLNPSSETVIDEGDTLVISGEGTGLKRLIREKLTAKGA.

Positions 76-161 (LEQVESALDD…LKRLIREKLT (86 aa)) constitute an RCK C-terminal domain.

This is an uncharacterized protein from Bacillus subtilis (strain 168).